We begin with the raw amino-acid sequence, 259 residues long: Deoxyribose-phosphate aldolase (259 aa).

Aspartate 102 (proton donor/acceptor) is an active-site residue. The active-site Schiff-base intermediate with acetaldehyde is lysine 167. Catalysis depends on lysine 201, which acts as the Proton donor/acceptor.

It belongs to the DeoC/FbaB aldolase family. DeoC type 2 subfamily.

The protein localises to the cytoplasm. It carries out the reaction 2-deoxy-D-ribose 5-phosphate = D-glyceraldehyde 3-phosphate + acetaldehyde. Its pathway is carbohydrate degradation; 2-deoxy-D-ribose 1-phosphate degradation; D-glyceraldehyde 3-phosphate and acetaldehyde from 2-deoxy-alpha-D-ribose 1-phosphate: step 2/2. In terms of biological role, catalyzes a reversible aldol reaction between acetaldehyde and D-glyceraldehyde 3-phosphate to generate 2-deoxy-D-ribose 5-phosphate. The protein is Deoxyribose-phosphate aldolase of Shigella flexneri.